Here is a 168-residue protein sequence, read N- to C-terminus: Peptide deformylase 1 (168 aa).

Fe cation contacts are provided by Cys91 and His133. Glu134 is an active-site residue. A Fe cation-binding site is contributed by His137.

The protein belongs to the polypeptide deformylase family. It depends on Fe(2+) as a cofactor.

The catalysed reaction is N-terminal N-formyl-L-methionyl-[peptide] + H2O = N-terminal L-methionyl-[peptide] + formate. Its function is as follows. Removes the formyl group from the N-terminal Met of newly synthesized proteins. Requires at least a dipeptide for an efficient rate of reaction. N-terminal L-methionine is a prerequisite for activity but the enzyme has broad specificity at other positions. The sequence is that of Peptide deformylase 1 from Vibrio vulnificus (strain YJ016).